Reading from the N-terminus, the 815-residue chain is Glycogen phosphorylase (815 aa).

Lys-662 carries the N6-(pyridoxal phosphate)lysine modification.

The protein belongs to the glycogen phosphorylase family. The cofactor is pyridoxal 5'-phosphate.

The enzyme catalyses [(1-&gt;4)-alpha-D-glucosyl](n) + phosphate = [(1-&gt;4)-alpha-D-glucosyl](n-1) + alpha-D-glucose 1-phosphate. Its function is as follows. Phosphorylase is an important allosteric enzyme in carbohydrate metabolism. Enzymes from different sources differ in their regulatory mechanisms and in their natural substrates. However, all known phosphorylases share catalytic and structural properties. The polypeptide is Glycogen phosphorylase (glgP) (Shigella flexneri).